The primary structure comprises 186 residues: Protein GrpE (186 aa).

2 stretches are compositionally biased toward basic and acidic residues: residues 1 to 13 (MSDN…EEQH) and 23 to 34 (EETHQAEDAVEH). Residues 1-34 (MSDNKTELNEEQHNATAEGEVSEETHQAEDAVEH) are disordered.

The protein belongs to the GrpE family. In terms of assembly, homodimer.

The protein resides in the cytoplasm. Functionally, participates actively in the response to hyperosmotic and heat shock by preventing the aggregation of stress-denatured proteins, in association with DnaK and GrpE. It is the nucleotide exchange factor for DnaK and may function as a thermosensor. Unfolded proteins bind initially to DnaJ; upon interaction with the DnaJ-bound protein, DnaK hydrolyzes its bound ATP, resulting in the formation of a stable complex. GrpE releases ADP from DnaK; ATP binding to DnaK triggers the release of the substrate protein, thus completing the reaction cycle. Several rounds of ATP-dependent interactions between DnaJ, DnaK and GrpE are required for fully efficient folding. The sequence is that of Protein GrpE from Hydrogenovibrio crunogenus (strain DSM 25203 / XCL-2) (Thiomicrospira crunogena).